The following is a 169-amino-acid chain: Probable calcium-binding protein CML20 (169 aa).

Residues 1–23 (MSSIYRTVSRKEKPRRHHGLTTQ) form a disordered region. EF-hand domains follow at residues 23–58 (QKKQEIKEAFELFDTDGSGTIDAKELNVAMRALGFE), 59–94 (MTEEQINKMIADVDKDGSGAIDFDEFVHMMTAKIGE), 96–131 (DTKEELTKAFQIIDLDKNGKISPDDIKRMAKDLGEN), and 132–167 (FTDAEIREMVEEADRDRDGEVNMDEFMRMMRRTAYG). Residues Asp-36, Asp-38, Ser-40, Thr-42, Glu-47, Asp-72, Asp-74, Ser-76, Glu-83, Asp-109, Asp-111, Asn-113, Lys-115, Asp-120, Asp-145, Asp-147, Asp-149, Glu-151, and Glu-156 each coordinate Ca(2+).

Interacts with TON1A and TON1B. Interacts with SAC3A and SAC3B. Interacts with UCH1 and UCH2.

Its function is as follows. Potential calcium sensor. This is Probable calcium-binding protein CML20 from Arabidopsis thaliana (Mouse-ear cress).